Consider the following 344-residue polypeptide: UDP-3-O-acylglucosamine N-acyltransferase (344 aa).

H248 (proton acceptor) is an active-site residue.

This sequence belongs to the transferase hexapeptide repeat family. LpxD subfamily. Homotrimer.

It catalyses the reaction a UDP-3-O-[(3R)-3-hydroxyacyl]-alpha-D-glucosamine + a (3R)-hydroxyacyl-[ACP] = a UDP-2-N,3-O-bis[(3R)-3-hydroxyacyl]-alpha-D-glucosamine + holo-[ACP] + H(+). Its pathway is bacterial outer membrane biogenesis; LPS lipid A biosynthesis. Its function is as follows. Catalyzes the N-acylation of UDP-3-O-acylglucosamine using 3-hydroxyacyl-ACP as the acyl donor. Is involved in the biosynthesis of lipid A, a phosphorylated glycolipid that anchors the lipopolysaccharide to the outer membrane of the cell. The sequence is that of UDP-3-O-acylglucosamine N-acyltransferase from Prochlorococcus marinus (strain MIT 9515).